Consider the following 438-residue polypeptide: Aspartate--tRNA(Asp) ligase (438 aa).

Residue E170 coordinates L-aspartate. The aspartate stretch occupies residues Q192–K195. R214 serves as a coordination point for L-aspartate. ATP-binding positions include R214 to E216, R222 to L224, and E361. 2 residues coordinate Mg(2+): E361 and S364. L-aspartate-binding residues include S364 and R368. Residue G409–R412 coordinates ATP.

It belongs to the class-II aminoacyl-tRNA synthetase family. Type 2 subfamily. As to quaternary structure, homodimer. The cofactor is Mg(2+).

It localises to the cytoplasm. It carries out the reaction tRNA(Asp) + L-aspartate + ATP = L-aspartyl-tRNA(Asp) + AMP + diphosphate. Its function is as follows. Catalyzes the attachment of L-aspartate to tRNA(Asp) in a two-step reaction: L-aspartate is first activated by ATP to form Asp-AMP and then transferred to the acceptor end of tRNA(Asp). In Pyrococcus furiosus (strain ATCC 43587 / DSM 3638 / JCM 8422 / Vc1), this protein is Aspartate--tRNA(Asp) ligase.